A 120-amino-acid polypeptide reads, in one-letter code: Large ribosomal subunit protein bL20 (120 aa).

It belongs to the bacterial ribosomal protein bL20 family.

In terms of biological role, binds directly to 23S ribosomal RNA and is necessary for the in vitro assembly process of the 50S ribosomal subunit. It is not involved in the protein synthesizing functions of that subunit. In Methylacidiphilum infernorum (isolate V4) (Methylokorus infernorum (strain V4)), this protein is Large ribosomal subunit protein bL20.